Reading from the N-terminus, the 337-residue chain is Lipoate-protein ligase A (337 aa).

Positions 29–216 constitute a BPL/LPL catalytic domain; the sequence is DQNQTILFLW…AFFNYYQTTV (188 aa). ATP-binding positions include arginine 71, 76-79, and lysine 134; that span reads GAVF. Lysine 134 serves as a coordination point for (R)-lipoate.

The protein belongs to the LplA family. Monomer.

It localises to the cytoplasm. The catalysed reaction is L-lysyl-[lipoyl-carrier protein] + (R)-lipoate + ATP = N(6)-[(R)-lipoyl]-L-lysyl-[lipoyl-carrier protein] + AMP + diphosphate + H(+). It functions in the pathway protein modification; protein lipoylation via exogenous pathway; protein N(6)-(lipoyl)lysine from lipoate: step 1/2. Its pathway is protein modification; protein lipoylation via exogenous pathway; protein N(6)-(lipoyl)lysine from lipoate: step 2/2. Its function is as follows. Catalyzes both the ATP-dependent activation of exogenously supplied lipoate to lipoyl-AMP and the transfer of the activated lipoyl onto the lipoyl domains of lipoate-dependent enzymes. This Blochmanniella floridana protein is Lipoate-protein ligase A.